Consider the following 77-residue polypeptide: Translation initiation factor IF-1, chloroplastic (77 aa).

Positions 1-71 (MKEQKLIHEG…TRGRIIYRLR (71 aa)) constitute an S1-like domain.

It belongs to the IF-1 family. In terms of assembly, component of the 30S ribosomal translation pre-initiation complex which assembles on the 30S ribosome in the order IF-2 and IF-3, IF-1 and N-formylmethionyl-tRNA(fMet); mRNA recruitment can occur at any time during PIC assembly.

It is found in the plastid. The protein localises to the chloroplast. Functionally, one of the essential components for the initiation of protein synthesis. Stabilizes the binding of IF-2 and IF-3 on the 30S subunit to which N-formylmethionyl-tRNA(fMet) subsequently binds. Helps modulate mRNA selection, yielding the 30S pre-initiation complex (PIC). Upon addition of the 50S ribosomal subunit IF-1, IF-2 and IF-3 are released leaving the mature 70S translation initiation complex. The sequence is that of Translation initiation factor IF-1, chloroplastic from Liriodendron tulipifera (Tuliptree).